Here is a 630-residue protein sequence, read N- to C-terminus: Probable potassium transport system protein Kup (630 aa).

The next 12 membrane-spanning stretches (helical) occupy residues 17-37 (LAIA…LYSL), 51-71 (PSAI…VVGI), 105-125 (ITGL…GDAV), 144-164 (PQLS…LFWI), 175-195 (LFGP…IYHI), 218-238 (VLLA…AEAL), 255-275 (YVLV…LLLL), 283-303 (PFFL…STVA), 344-364 (IYVP…VIGF), 374-394 (YGIA…VVMV), 402-422 (LLVA…FGAN), and 428-448 (QGGW…MTWY).

Belongs to the HAK/KUP transporter (TC 2.A.72) family.

The protein localises to the cell inner membrane. The enzyme catalyses K(+)(in) + H(+)(in) = K(+)(out) + H(+)(out). In terms of biological role, transport of potassium into the cell. Likely operates as a K(+):H(+) symporter. The protein is Probable potassium transport system protein Kup of Burkholderia pseudomallei (strain 1710b).